Consider the following 233-residue polypeptide: Cytidylate kinase (233 aa).

Residue G15 to T23 coordinates ATP. A compositionally biased stretch (basic and acidic residues) spans R183–D201. A disordered region spans residues R183–A202.

This sequence belongs to the cytidylate kinase family. Type 1 subfamily.

It localises to the cytoplasm. It catalyses the reaction CMP + ATP = CDP + ADP. The enzyme catalyses dCMP + ATP = dCDP + ADP. The sequence is that of Cytidylate kinase from Geobacter sulfurreducens (strain ATCC 51573 / DSM 12127 / PCA).